We begin with the raw amino-acid sequence, 323 residues long: tRNA dimethylallyltransferase (323 aa).

An ATP-binding site is contributed by 18–25; sequence GPTASGKT. A substrate-binding site is contributed by 20–25; that stretch reads TASGKT. Residues 44–47 are interaction with substrate tRNA; sequence DSAL.

It belongs to the IPP transferase family. As to quaternary structure, monomer. The cofactor is Mg(2+).

It catalyses the reaction adenosine(37) in tRNA + dimethylallyl diphosphate = N(6)-dimethylallyladenosine(37) in tRNA + diphosphate. In terms of biological role, catalyzes the transfer of a dimethylallyl group onto the adenine at position 37 in tRNAs that read codons beginning with uridine, leading to the formation of N6-(dimethylallyl)adenosine (i(6)A). The chain is tRNA dimethylallyltransferase from Blochmanniella floridana.